Consider the following 123-residue polypeptide: Small ribosomal subunit protein uS12 (123 aa).

Positions 1-29 are disordered; that stretch reads MPTINQLVRKGRVPQKAKSKVPAMEQNPQ. A compositionally biased stretch (basic residues) spans 9 to 19; the sequence is RKGRVPQKAKS. Aspartate 89 bears the 3-methylthioaspartic acid mark.

Belongs to the universal ribosomal protein uS12 family. In terms of assembly, part of the 30S ribosomal subunit. Contacts proteins S8 and S17. May interact with IF1 in the 30S initiation complex.

Functionally, with S4 and S5 plays an important role in translational accuracy. Its function is as follows. Interacts with and stabilizes bases of the 16S rRNA that are involved in tRNA selection in the A site and with the mRNA backbone. Located at the interface of the 30S and 50S subunits, it traverses the body of the 30S subunit contacting proteins on the other side and probably holding the rRNA structure together. The combined cluster of proteins S8, S12 and S17 appears to hold together the shoulder and platform of the 30S subunit. The protein is Small ribosomal subunit protein uS12 of Erythrobacter litoralis (strain HTCC2594).